We begin with the raw amino-acid sequence, 134 residues long: MENKKTIYFLCTGNSCRSQMAEAWGKQYLGDKWNVYSAGIEAHGVNPNAIKAMNEVNIDITNQTSDIIDANILNRADLVVTLCSHADAVCPSTPPHVNRVHWGFDDPAGKEWPEFQRVRDEIGERIKRFSETGE.

Residues cysteine 11, cysteine 83, and cysteine 90 each act as nucleophile in the active site. Disulfide bonds link cysteine 11–cysteine 83 and cysteine 83–cysteine 90.

Belongs to the low molecular weight phosphotyrosine protein phosphatase family. Thioredoxin-coupled ArsC subfamily.

It is found in the cytoplasm. The catalysed reaction is arsenate + [thioredoxin]-dithiol + H(+) = arsenite + [thioredoxin]-disulfide + H2O. Catalyzes the reduction of arsenate [As(V)] to arsenite [As(III)]. The protein is Arsenate reductase of Bacillus anthracis (strain A0248).